We begin with the raw amino-acid sequence, 383 residues long: Chaperone protein DnaJ (383 aa).

The 66-residue stretch at Asp-5 to Gly-70 folds into the J domain. The CR-type zinc finger occupies Gly-139–Glu-217. Zn(2+) contacts are provided by Cys-152, Cys-155, Cys-169, Cys-172, Cys-191, Cys-194, Cys-205, and Cys-208. CXXCXGXG motif repeat units follow at residues Cys-152 to Gly-159, Cys-169 to Gly-176, Cys-191 to Gly-198, and Cys-205 to Gly-212.

Belongs to the DnaJ family. In terms of assembly, homodimer. Zn(2+) serves as cofactor.

It localises to the cytoplasm. In terms of biological role, participates actively in the response to hyperosmotic and heat shock by preventing the aggregation of stress-denatured proteins and by disaggregating proteins, also in an autonomous, DnaK-independent fashion. Unfolded proteins bind initially to DnaJ; upon interaction with the DnaJ-bound protein, DnaK hydrolyzes its bound ATP, resulting in the formation of a stable complex. GrpE releases ADP from DnaK; ATP binding to DnaK triggers the release of the substrate protein, thus completing the reaction cycle. Several rounds of ATP-dependent interactions between DnaJ, DnaK and GrpE are required for fully efficient folding. Also involved, together with DnaK and GrpE, in the DNA replication of plasmids through activation of initiation proteins. This Methylorubrum populi (strain ATCC BAA-705 / NCIMB 13946 / BJ001) (Methylobacterium populi) protein is Chaperone protein DnaJ.